The primary structure comprises 112 residues: uncharacterized protein (112 aa).

Coiled-coil stretches lie at residues 15-53 (AEKK…FFKF) and 86-103 (LDYE…TERK).

This is an uncharacterized protein from Aquifex aeolicus (strain VF5).